The sequence spans 255 residues: ParA family protein CT_582 (255 aa).

It belongs to the ParA family.

The polypeptide is ParA family protein CT_582 (Chlamydia trachomatis serovar D (strain ATCC VR-885 / DSM 19411 / UW-3/Cx)).